Reading from the N-terminus, the 257-residue chain is Hydroxypyruvate/pyruvate aldolase (257 aa).

Residue His-48 is the Proton acceptor of the active site. Residues Glu-152 and Asp-178 each contribute to the a divalent metal cation site.

This sequence belongs to the HpcH/HpaI aldolase family. The cofactor is a divalent metal cation.

It catalyses the reaction D-glyceraldehyde + 3-hydroxypyruvate = 2-dehydro-D-gluconate. The enzyme catalyses D-glyceraldehyde + pyruvate = 2-dehydro-3-deoxy-L-galactonate. The catalysed reaction is 2-dehydro-3-deoxy-D-gluconate = D-glyceraldehyde + pyruvate. Aldolase which can catalyze in vitro the aldolisation reaction between hydroxypyruvate (HPA) or pyruvate (PA) and D-glyceraldehyde (D-GA). The condensation of hydroxypyruvate and D-glyceraldehyde produces 2-dehydro-D-gluconate as the major product. The condensation of pyruvate and D-glyceraldehyde produces 2-dehydro-3-deoxy-L-galactonate as the major product and 2-dehydro-3-deoxy-D-gluconate. This is Hydroxypyruvate/pyruvate aldolase from Roseovarius nubinhibens (strain ATCC BAA-591 / DSM 15170 / ISM).